We begin with the raw amino-acid sequence, 704 residues long: Mannan-binding lectin serine protease 1 (704 aa).

An N-terminal signal peptide occupies residues 1–24 (MRFLSFRRLLLYHVLCLTLTEVSA). Residues 25 to 143 (HTVELNEMFG…TGFDAHYMAV (119 aa)) enclose the CUB 1 domain. Positions 25–189 (HTVELNEMFG…HTDNRTCRVE (165 aa)) are homodimerization. The interaction with MBL2 stretch occupies residues 25–189 (HTVELNEMFG…HTDNRTCRVE (165 aa)). An interaction with FCN2 region spans residues 25-283 (HTVELNEMFG…STQSHSIQIL (259 aa)). The interaction with MBL1 stretch occupies residues 25–305 (HTVELNEMFG…RLSYRAAGNE (281 aa)). Asparagine 54 is a glycosylation site (N-linked (GlcNAc...) asparagine). Ca(2+)-binding residues include glutamate 73, aspartate 81, aspartate 126, serine 128, aspartate 144, valine 145, and glutamate 147. A disulfide bridge connects residues cysteine 78 and cysteine 96. The 44-residue stretch at 144–187 (DVDECKEREDEELSCDHYCHNYIGGYYCSCRFGYILHTDNRTCR) folds into the EGF-like; calcium-binding domain. 4 disulfides stabilise this stretch: cysteine 148-cysteine 162, cysteine 158-cysteine 171, cysteine 173-cysteine 186, and cysteine 190-cysteine 217. 3 residues coordinate Ca(2+): asparagine 164, tyrosine 165, and glycine 168. Asparagine 164 carries the post-translational modification (3R)-3-hydroxyasparagine. The N-linked (GlcNAc...) asparagine glycan is linked to asparagine 183. A CUB 2 domain is found at 190 to 302 (CSGNLFTQRT…RGWRLSYRAA (113 aa)). 4 residues coordinate Ca(2+): glutamate 240, aspartate 250, aspartate 287, and serine 289. An intrachain disulfide couples cysteine 247 to cysteine 265. 2 consecutive Sushi domains span residues 304 to 369 (NECP…TCKI) and 370 to 439 (VDCG…TCLP). Disulfide bonds link cysteine 306/cysteine 354, cysteine 334/cysteine 367, cysteine 372/cysteine 419, cysteine 402/cysteine 437, cysteine 441/cysteine 577, and cysteine 480/cysteine 496. Asparagine 390 and asparagine 412 each carry an N-linked (GlcNAc...) asparagine glycan. In terms of domain architecture, Peptidase S1 spans 454-701 (IFNGRPAQKG…NKDWIQRVTG (248 aa)). Histidine 495 functions as the Charge relay system in the catalytic mechanism. The N-linked (GlcNAc...) asparagine glycan is linked to leucine 538. The Charge relay system role is filled by aspartate 557. An N-linked (GlcNAc...) asparagine glycan is attached at glutamate 604. Intrachain disulfides connect cysteine 619–cysteine 636 and cysteine 647–cysteine 677. The active-site Charge relay system is serine 651.

It belongs to the peptidase S1 family. Homodimer. Interacts with the oligomeric lectins MBL2, FCN2 and FCN3; triggers the lectin pathway of complement through activation of C3. Interacts with SERPING1. Interacts with COLEC11; probably triggers the lectin pathway of complement. In terms of processing, the iron and 2-oxoglutarate dependent 3-hydroxylation of aspartate and asparagine is (R) stereospecific within EGF domains. Post-translationally, N-glycosylated. Some N-linked glycan are of the complex-type. Autoproteolytic processing of the proenzyme produces the active enzyme composed on the heavy and the light chain held together by a disulfide bond. Isoform 1 but not isoform 2 is activated through autoproteolytic processing. In terms of tissue distribution, protein of the plasma which is primarily expressed by liver.

The protein resides in the secreted. Inhibited by SERPING1 and A2M. Functions in the lectin pathway of complement, which performs a key role in innate immunity by recognizing pathogens through patterns of sugar moieties and neutralizing them. The lectin pathway is triggered upon binding of mannan-binding lectin (MBL) and ficolins to sugar moieties which leads to activation of the associated proteases MASP1 and MASP2. Functions as an endopeptidase and may activate MASP2 or C2 or directly activate C3 the key component of complement reaction. Isoform 2 may have an inhibitory effect on the activation of the lectin pathway of complement or may cleave IGFBP5. Also plays a role in development. In Rattus norvegicus (Rat), this protein is Mannan-binding lectin serine protease 1 (Masp1).